Consider the following 311-residue polypeptide: Dehydrogenase/reductase SDR family member 7C (311 aa).

The N-terminal stretch at 1 to 18 is a signal peptide; sequence MGFLTFLIVPLLILGISG. Position 41–65 (41–65) interacts with NAD(+); the sequence is VITDAISGLGKECSRVFHSAGARLV. Thr178 is a binding site for substrate. Tyr191 serves as the catalytic Proton acceptor.

Belongs to the short-chain dehydrogenases/reductases (SDR) family.

The protein resides in the secreted. In terms of biological role, putative oxidoreductase. This chain is Dehydrogenase/reductase SDR family member 7C (dhrs7c), found in Xenopus tropicalis (Western clawed frog).